A 108-amino-acid chain; its full sequence is UPF0060 membrane protein Ent638_1931 (108 aa).

The next 4 helical transmembrane spans lie at 6-26, 29-49, 61-81, and 85-105; these read LLFFATALCEIIGCFLPWLWL, GASVFLLLPAGIALALFVWLL, AAYGGVYVCTALLWLRVVDGV, and AYDWAGALVALCGMLIIVAGW.

It belongs to the UPF0060 family.

The protein resides in the cell inner membrane. The chain is UPF0060 membrane protein Ent638_1931 from Enterobacter sp. (strain 638).